Reading from the N-terminus, the 333-residue chain is 4-hydroxy-3-methylbut-2-enyl diphosphate reductase (333 aa).

Cys33 is a [4Fe-4S] cluster binding site. The (2E)-4-hydroxy-3-methylbut-2-enyl diphosphate site is built by His62 and His95. Residues His62 and His95 each contribute to the dimethylallyl diphosphate site. Isopentenyl diphosphate-binding residues include His62 and His95. A [4Fe-4S] cluster-binding site is contributed by Cys117. His145 provides a ligand contact to (2E)-4-hydroxy-3-methylbut-2-enyl diphosphate. His145 lines the dimethylallyl diphosphate pocket. Isopentenyl diphosphate is bound at residue His145. Residue Glu147 is the Proton donor of the active site. A (2E)-4-hydroxy-3-methylbut-2-enyl diphosphate-binding site is contributed by Thr186. Cys216 serves as a coordination point for [4Fe-4S] cluster. 4 residues coordinate (2E)-4-hydroxy-3-methylbut-2-enyl diphosphate: Ser244, Ser245, Asn246, and Ser289. 4 residues coordinate dimethylallyl diphosphate: Ser244, Ser245, Asn246, and Ser289. Isopentenyl diphosphate contacts are provided by Ser244, Ser245, Asn246, and Ser289.

This sequence belongs to the IspH family. It depends on [4Fe-4S] cluster as a cofactor.

It catalyses the reaction isopentenyl diphosphate + 2 oxidized [2Fe-2S]-[ferredoxin] + H2O = (2E)-4-hydroxy-3-methylbut-2-enyl diphosphate + 2 reduced [2Fe-2S]-[ferredoxin] + 2 H(+). The catalysed reaction is dimethylallyl diphosphate + 2 oxidized [2Fe-2S]-[ferredoxin] + H2O = (2E)-4-hydroxy-3-methylbut-2-enyl diphosphate + 2 reduced [2Fe-2S]-[ferredoxin] + 2 H(+). The protein operates within isoprenoid biosynthesis; dimethylallyl diphosphate biosynthesis; dimethylallyl diphosphate from (2E)-4-hydroxy-3-methylbutenyl diphosphate: step 1/1. It participates in isoprenoid biosynthesis; isopentenyl diphosphate biosynthesis via DXP pathway; isopentenyl diphosphate from 1-deoxy-D-xylulose 5-phosphate: step 6/6. Functionally, catalyzes the conversion of 1-hydroxy-2-methyl-2-(E)-butenyl 4-diphosphate (HMBPP) into a mixture of isopentenyl diphosphate (IPP) and dimethylallyl diphosphate (DMAPP). Acts in the terminal step of the DOXP/MEP pathway for isoprenoid precursor biosynthesis. This is 4-hydroxy-3-methylbut-2-enyl diphosphate reductase from Corynebacterium diphtheriae (strain ATCC 700971 / NCTC 13129 / Biotype gravis).